Reading from the N-terminus, the 394-residue chain is Putative transporter AraJ (394 aa).

Topologically, residues methionine 1–valine 4 are cytoplasmic. Residues isoleucine 5–threonine 27 traverse the membrane as a helical segment. The Periplasmic segment spans residues glutamate 28–glycine 41. A helical membrane pass occupies residues histidine 42–serine 63. Over arginine 64 to histidine 69 the chain is Cytoplasmic. A helical transmembrane segment spans residues isoleucine 70–serine 89. The Periplasmic portion of the chain corresponds to serine 90–methionine 93. A helical membrane pass occupies residues leucine 94–leucine 116. Residues serine 117–alanine 128 are Cytoplasmic-facing. A helical membrane pass occupies residues valine 129 to serine 151. Residues glutamine 152–serine 155 lie on the Periplasmic side of the membrane. The helical transmembrane segment at tryptophan 156–valine 178 threads the bilayer. At proline 179–serine 198 the chain is on the cytoplasmic side. Residues proline 199–tyrosine 221 traverse the membrane as a helical segment. Residues valine 222 to threonine 235 lie on the Periplasmic side of the membrane. A helical membrane pass occupies residues alanine 236–serine 255. Residues glycine 256 to arginine 261 are Cytoplasmic-facing. Residues tyrosine 262–phenylalanine 284 traverse the membrane as a helical segment. Residues cysteine 285–leucine 293 are Periplasmic-facing. The helical transmembrane segment at isoleucine 294–glutamine 316 threads the bilayer. Residues asparagine 317–glutamate 322 are Cytoplasmic-facing. Residues leucine 323–tyrosine 342 traverse the membrane as a helical segment. Residues cysteine 343–glycine 351 lie on the Periplasmic side of the membrane. Residues leucine 352–leucine 374 form a helical membrane-spanning segment. The Cytoplasmic segment spans residues tyrosine 375 to glycine 394.

The protein belongs to the major facilitator superfamily.

The protein resides in the cell inner membrane. Functionally, may be involved in either the transport or processing of arabinose polymers. The sequence is that of Putative transporter AraJ (araJ) from Escherichia coli (strain K12).